The chain runs to 126 residues: Aspartate 1-decarboxylase (126 aa).

S25 acts as the Schiff-base intermediate with substrate; via pyruvic acid in catalysis. S25 carries the post-translational modification Pyruvic acid (Ser). T57 serves as a coordination point for substrate. The active-site Proton donor is the Y58. 73–75 is a binding site for substrate; the sequence is GAA.

This sequence belongs to the PanD family. In terms of assembly, heterooctamer of four alpha and four beta subunits. Requires pyruvate as cofactor. Is synthesized initially as an inactive proenzyme, which is activated by self-cleavage at a specific serine bond to produce a beta-subunit with a hydroxyl group at its C-terminus and an alpha-subunit with a pyruvoyl group at its N-terminus.

The protein localises to the cytoplasm. It carries out the reaction L-aspartate + H(+) = beta-alanine + CO2. The protein operates within cofactor biosynthesis; (R)-pantothenate biosynthesis; beta-alanine from L-aspartate: step 1/1. In terms of biological role, catalyzes the pyruvoyl-dependent decarboxylation of aspartate to produce beta-alanine. The protein is Aspartate 1-decarboxylase of Salmonella choleraesuis (strain SC-B67).